The primary structure comprises 141 residues: Calcitonin (141 aa).

Positions 1 to 25 (MGFQKFSPFLALSILVLLQAGSLHA) are cleaved as a signal peptide. Positions 26-82 (APFRSALESSPADPATLSEDEARLLLAALVQDYVQMKASELEQEQEREGSSLDSPRS) are excised as a propeptide. Ser43 is subject to Phosphoserine. Disordered stretches follow at residues 64-85 (SELE…SKRC) and 111-141 (IGVG…QNAN). A disulfide bridge connects residues Cys85 and Cys91. Residue Pro116 is modified to Proline amide. Basic and acidic residues predominate over residues 118 to 132 (KKRDMSSDLERDHRP).

Belongs to the calcitonin family.

Its subcellular location is the secreted. In terms of biological role, calcitonin is a peptide hormone that causes a rapid but short-lived drop in the level of calcium and phosphate in blood by promoting the incorporation of those ions in the bones. Calcitonin function is mediated by the calcitonin receptor/CALCR and the CALCR-RAMP2 (AMYR2) receptor complex. Katacalcin is a potent plasma calcium-lowering peptide. In Homo sapiens (Human), this protein is Calcitonin.